Here is a 95-residue protein sequence, read N- to C-terminus: Protein GOLVEN 9 (95 aa).

The first 24 residues, 1–24 (MKKTSLKLMTLVLGFCFVIYLLQG), serve as a signal peptide directing secretion. The propeptide occupies 25–73 (PRGGSRNGDLLIARKLISLEPIETKNAARSLKDSISTDLEEEVDRLMEH). Positions 72-95 (EHEYPSPVKPRKRTPVHNGVRNRH) are disordered. Position 75 is a sulfotyrosine (Tyr75). Residues 80–95 (KPRKRTPVHNGVRNRH) are compositionally biased toward basic residues. Hydroxyproline is present on Pro86. Residues 90-95 (GVRNRH) constitute a propeptide that is removed on maturation.

The protein belongs to the RGF family. Binds to LRR receptor-like serine/threonine-protein kinases to trigger their dimerization with SERK proteins and subsequent signaling. Expressed in roots.

It is found in the secreted. Functionally, signaling peptide (root growth factor) required during root gravitropism in a PIN2-traffic dependent manner. Regulates the pattern of root growth and lateral root development by modulating the length and the number of cortical cells in the root apical meristem (RAM), and the anticlinal asymmetric cell divisions in lateral root initiation cells. In Arabidopsis thaliana (Mouse-ear cress), this protein is Protein GOLVEN 9.